Reading from the N-terminus, the 412-residue chain is Transforming growth factor beta-3 proprotein (412 aa).

A signal peptide spans 1–23 (MKMHLQRALVVLALLNFATVSLS). N-linked (GlcNAc...) asparagine glycosylation is found at N74, N135, and N142. The short motif at 261–263 (RGD) is the Cell attachment site element. An N5-methylglutamine modification is found at Q293. 4 disulfides stabilise this stretch: C307/C316, C315/C378, C344/C409, and C348/C411.

Belongs to the TGF-beta family. As to quaternary structure, interacts with ASPN. Latency-associated peptide: Homodimer; disulfide-linked. Latency-associated peptide: Interacts with Transforming growth factor beta-3 (TGF-beta-3) chain; interaction is non-covalent and maintains (TGF-beta-3) in a latent state. Latency-associated peptide: Interacts with LRRC32/GARP; leading to regulate activation of TGF-beta-3 and promote epithelial fusion during palate development. Latency-associated peptide: Interacts (via cell attachment site) with integrins, leading to release of the active TGF-beta-3. Transforming growth factor beta-3: Homodimer; disulfide-linked. Transforming growth factor beta-3: Interacts with TGF-beta receptors (TGFBR1 and TGFBR2), leading to signal transduction. Transforming growth factor beta-3 proprotein: The precursor proprotein is cleaved in the Golgi apparatus to form Transforming growth factor beta-3 (TGF-beta-3) and Latency-associated peptide (LAP) chains, which remain non-covalently linked, rendering TGF-beta-3 inactive. Post-translationally, methylated at Gln-293 by N6AMT1.

The protein localises to the secreted. The protein resides in the extracellular space. It localises to the extracellular matrix. In terms of biological role, transforming growth factor beta-3 proprotein: Precursor of the Latency-associated peptide (LAP) and Transforming growth factor beta-3 (TGF-beta-3) chains, which constitute the regulatory and active subunit of TGF-beta-3, respectively. Its function is as follows. Required to maintain the Transforming growth factor beta-3 (TGF-beta-3) chain in a latent state during storage in extracellular matrix. Associates non-covalently with TGF-beta-3 and regulates its activation via interaction with 'milieu molecules', such as LTBP1 and LRRC32/GARP, that control activation of TGF-beta-3. Interaction with integrins results in distortion of the Latency-associated peptide chain and subsequent release of the active TGF-beta-3. Functionally, transforming growth factor beta-3: Multifunctional protein that regulates embryogenesis and cell differentiation and is required in various processes such as secondary palate development. Activation into mature form follows different steps: following cleavage of the proprotein in the Golgi apparatus, Latency-associated peptide (LAP) and Transforming growth factor beta-3 (TGF-beta-3) chains remain non-covalently linked rendering TGF-beta-3 inactive during storage in extracellular matrix. At the same time, LAP chain interacts with 'milieu molecules', such as LTBP1 and LRRC32/GARP that control activation of TGF-beta-3 and maintain it in a latent state during storage in extracellular milieus. TGF-beta-3 is released from LAP by integrins: integrin-binding results in distortion of the LAP chain and subsequent release of the active TGF-beta-3. Once activated following release of LAP, TGF-beta-3 acts by binding to TGF-beta receptors (TGFBR1 and TGFBR2), which transduce signal. The polypeptide is Transforming growth factor beta-3 proprotein (TGFB3) (Homo sapiens (Human)).